Reading from the N-terminus, the 305-residue chain is Ribonuclease Z (305 aa).

Zn(2+) is bound by residues His61, His63, Asp65, His66, His138, Asp208, and His266. Asp65 serves as the catalytic Proton acceptor.

Belongs to the RNase Z family. Homodimer. Zn(2+) serves as cofactor.

It catalyses the reaction Endonucleolytic cleavage of RNA, removing extra 3' nucleotides from tRNA precursor, generating 3' termini of tRNAs. A 3'-hydroxy group is left at the tRNA terminus and a 5'-phosphoryl group is left at the trailer molecule.. Its function is as follows. Zinc phosphodiesterase, which displays some tRNA 3'-processing endonuclease activity. Probably involved in tRNA maturation, by removing a 3'-trailer from precursor tRNA. The polypeptide is Ribonuclease Z (Methanosarcina mazei (strain ATCC BAA-159 / DSM 3647 / Goe1 / Go1 / JCM 11833 / OCM 88) (Methanosarcina frisia)).